Consider the following 203-residue polypeptide: Superoxide dismutase [Mn] (203 aa).

Positions 31, 79, 161, and 165 each coordinate Mn(2+).

The protein belongs to the iron/manganese superoxide dismutase family. Mn(2+) serves as cofactor.

It carries out the reaction 2 superoxide + 2 H(+) = H2O2 + O2. Destroys superoxide anion radicals which are normally produced within the cells and which are toxic to biological systems. The polypeptide is Superoxide dismutase [Mn] (sod) (Haloarcula marismortui (strain ATCC 43049 / DSM 3752 / JCM 8966 / VKM B-1809) (Halobacterium marismortui)).